The chain runs to 636 residues: Autophagy-related protein 20 (636 aa).

Disordered stretches follow at residues 1–68 and 84–163; these read MQIN…QPHE and NYMQ…EGKK. Polar residues predominate over residues 10–23; sequence NSVTHLENNSPSRL. A compositionally biased stretch (basic and acidic residues) spans 27–49; it reads KTVEEHKEHEPDLQTQSEMRRES. Polar residues predominate over residues 50–64; the sequence is NGSPKDTAVTNQNGD. Over residues 122–133 the composition is skewed to basic residues; that stretch reads NRRKNSKERRRS. Residues 160 to 305 enclose the PX domain; sequence EGKKRAQILE…DFLDPNNKNW (146 aa). 4 residues coordinate a 1,2-diacyl-sn-glycero-3-phospho-(1D-myo-inositol-3-phosphate): arginine 196, serine 198, lysine 222, and arginine 271.

This sequence belongs to the sorting nexin family.

Its subcellular location is the endosome membrane. It localises to the preautophagosomal structure membrane. Its function is as follows. Required for cytoplasm to vacuole transport (Cvt), pexophagy and mitophagy. Also involved in endoplasmic reticulum-specific autophagic process and is essential for the survival of cells subjected to severe ER stress. Functions in protein retrieval from the endocytic pathway. This chain is Autophagy-related protein 20 (ATG20), found in Kluyveromyces lactis (strain ATCC 8585 / CBS 2359 / DSM 70799 / NBRC 1267 / NRRL Y-1140 / WM37) (Yeast).